The following is a 108-amino-acid chain: Nucleoid-associated protein BQ02190 (108 aa).

The protein belongs to the YbaB/EbfC family. Homodimer.

The protein localises to the cytoplasm. Its subcellular location is the nucleoid. Functionally, binds to DNA and alters its conformation. May be involved in regulation of gene expression, nucleoid organization and DNA protection. This chain is Nucleoid-associated protein BQ02190, found in Bartonella quintana (strain Toulouse) (Rochalimaea quintana).